An 88-amino-acid polypeptide reads, in one-letter code: Pigment dispersing factor homolog pdf-1 (88 aa).

An N-terminal signal peptide occupies residues 1-21 (MNRFIISMIALLAVFCAVSTA).

The protein localises to the secreted. Functionally, probable ligand of isoforms a and b of the calcitonin receptor-like protein, pdfr-1, a G-protein coupled receptor. May not signal through isoform c of pdfr-1. Involved in locomotion; more specifically mate searching behavior of males, independent of nutritional status. Involved in regulating the male-specific expression of TGFbeta-like daf-7 in the ASJ chemosensory neurons. Plays a role in circadian rhythms of locomotor activity. Involved in mediating arousal from the sleep-like state called lethargus, which occurs during molting between larval and adult stages, in part by regulating touch sensitivity, and working in concert with neuropeptide flp-2. In the presence of food, plays a role in initiating and extending exploratory roaming behavior, in opposition to 5-hydroxytryptamine (serotonin) signaling. In Caenorhabditis elegans, this protein is Pigment dispersing factor homolog pdf-1.